Here is a 770-residue protein sequence, read N- to C-terminus: Probable copper-exporting P-type ATPase V (770 aa).

Residues 1-66 (MRVCVTGFNV…AITKAQHVPA (66 aa)) form the HMA domain. Positions 103-130 (DKPLKASRCGGRPRGPVRGSASWPGEQN) are disordered. Over residues 110-121 (RCGGRPRGPVRG) the composition is skewed to low complexity. 6 consecutive transmembrane segments (helical) span residues 141–161 (VWLA…FGAY), 164–184 (AGWL…WPIL), 193–213 (ALTS…FVYS), 217–237 (LFAG…FVVL), 377–397 (AVFV…WTLI), and 402–422 (VAGM…ALGL). D460 serves as the catalytic 4-aspartylphosphate intermediate. Mg(2+)-binding residues include D660 and D664. Transmembrane regions (helical) follow at residues 718 to 737 (LGWA…LGAL) and 741 to 760 (VAGA…SLRL).

This sequence belongs to the cation transport ATPase (P-type) (TC 3.A.3) family. Type IB subfamily.

It is found in the cell membrane. It catalyses the reaction Cu(+)(in) + ATP + H2O = Cu(+)(out) + ADP + phosphate + H(+). Its function is as follows. Necessary for copper homeostasis and likely functions as a copper exporter. Also required for full virulence. The protein is Probable copper-exporting P-type ATPase V (ctpV) of Mycobacterium tuberculosis (strain CDC 1551 / Oshkosh).